A 238-amino-acid polypeptide reads, in one-letter code: Large ribosomal subunit protein bL25 (238 aa).

A compositionally biased stretch (basic and acidic residues) spans 1 to 10 (MATTVKELKA). The segment at 1–24 (MATTVKELKATARPKSGKGAARAE) is disordered.

This sequence belongs to the bacterial ribosomal protein bL25 family. CTC subfamily. Part of the 50S ribosomal subunit; part of the 5S rRNA/L5/L18/L25 subcomplex. Contacts the 5S rRNA. Binds to the 5S rRNA independently of L5 and L18.

Functionally, this is one of the proteins that binds to the 5S RNA in the ribosome where it forms part of the central protuberance. The polypeptide is Large ribosomal subunit protein bL25 (Bradyrhizobium diazoefficiens (strain JCM 10833 / BCRC 13528 / IAM 13628 / NBRC 14792 / USDA 110)).